The chain runs to 222 residues: Ribonuclease T (222 aa).

The Exonuclease domain maps to 20–194 (VVIDVETAGF…YDTERTAELF (175 aa)). Mg(2+) contacts are provided by Asp23, Glu25, His181, and Asp186. His181 serves as the catalytic Proton donor/acceptor.

It belongs to the RNase T family. As to quaternary structure, homodimer. Mg(2+) serves as cofactor.

In terms of biological role, trims short 3' overhangs of a variety of RNA species, leaving a one or two nucleotide 3' overhang. Responsible for the end-turnover of tRNA: specifically removes the terminal AMP residue from uncharged tRNA (tRNA-C-C-A). Also appears to be involved in tRNA biosynthesis. The polypeptide is Ribonuclease T (Shewanella sp. (strain MR-4)).